The primary structure comprises 716 residues: Iron-sulfur clusters transporter atm1, mitochondrial (716 aa).

A mitochondrion-targeting transit peptide spans 1 to 18; it reads MAPSIKLSTMATSLHRAH. At 19-123 the chain is on the mitochondrial matrix side; sequence GTSALLRRPR…PKGSWGDKAR (105 aa). The tract at residues 57–87 is disordered; it reads LFAPNGSAKDESKPAVSTVPKTTGRGPSDPL. Residues 124 to 145 traverse the membrane as a helical segment; the sequence is VLLAIGLLVGGKVLNVQVPFYF. The 291-residue stretch at 124–414 folds into the ABC transmembrane type-1 domain; it reads VLLAIGLLVG…LGSVYRELRQ (291 aa). The Mitochondrial intermembrane portion of the chain corresponds to 146 to 168; the sequence is REIVDSLNIDFSTTGGSVTAVAG. Residues 169–192 traverse the membrane as a helical segment; that stretch reads AMILGYGAARVGAVVSQELRNAVF. At 193–241 the chain is on the mitochondrial matrix side; it reads ASVAQKAIRKVARNTFEHLLNLDLSFHLSKQTGGLTRAIDRGTKGISFL. The chain crosses the membrane as a helical span at residues 242 to 265; it reads LTSMVFHIVPTALEISMVCGILTY. A topological domain (mitochondrial intermembrane) is located at residue asparagine 266. A helical transmembrane segment spans residues 267 to 287; it reads FGWQYAALTALTMVSYTAFTI. The Mitochondrial matrix portion of the chain corresponds to 288–353; that stretch reads LTTAWRTKFR…NSIKVATSLA (66 aa). Glutathione-binding positions include 293 to 297 and 356 to 359; these read RTKFR and NSGQ. A helical membrane pass occupies residues 354–372; it reads FLNSGQNIIFSSALTVMMY. Over 373–387 the chain is Mitochondrial intermembrane; it reads MGAHGVATGQLTVGD. Residues 388 to 409 traverse the membrane as a helical segment; sequence LVLINQLVFQLSVPLNFLGSVY. Position 406 (glycine 406) interacts with glutathione. Residues 410–716 lie on the Mitochondrial matrix side of the membrane; that stretch reads RELRQSLLDM…KEEVGEKKEA (307 aa). An ABC transporter domain is found at 449–690; it reads IEFKDVTFGY…NGVYAQLWRA (242 aa). ATP-binding positions include tyrosine 458 and 482-493; that span reads GPSGCGKSTLLR. A disordered region spans residues 697–716; sequence EEGEVSKKGEKEEVGEKKEA. Residues 700–716 are compositionally biased toward basic and acidic residues; it reads EVSKKGEKEEVGEKKEA.

Belongs to the ABC transporter superfamily. ABCB family. Heavy Metal importer (TC 3.A.1.210) subfamily. In terms of assembly, homodimer.

The protein localises to the mitochondrion inner membrane. In terms of biological role, performs an essential function in the generation of cytoplasmic iron-sulfur proteins by mediating the ATP-dependent export of Fe/S cluster precursors synthesized by egt-3 and other mitochondrial proteins. Hydrolyzes ATP. Binds glutathione and may function by transporting a glutathione-conjugated iron-sulfur compound. This is Iron-sulfur clusters transporter atm1, mitochondrial from Neurospora crassa (strain ATCC 24698 / 74-OR23-1A / CBS 708.71 / DSM 1257 / FGSC 987).